A 344-amino-acid chain; its full sequence is Pre-mRNA polyadenylation factor fip1 (344 aa).

2 disordered regions span residues 1 to 99 (MSNA…LSTA) and 230 to 344 (NYNT…RNRY). Residues 28–38 (VTVSNAKSPEQ) are compositionally biased toward polar residues. The segment covering 39–50 (ASEESDDSDIEF) has biased composition (acidic residues). The segment covering 80–92 (QVEKTAVEVKTTE) has biased composition (basic and acidic residues). Residues 243-258 (SGAATPNAYVNNNPSS) show a composition bias toward low complexity. Polar residues predominate over residues 271-301 (NITSSAGMTHAQPTHNPTSSYGNGASTNYNA). Over residues 302–317 (SRPPSNHPHSSNYPSS) the composition is skewed to low complexity.

It belongs to the FIP1 family.

It is found in the nucleus. Pre-mRNA polyadenylation factor that directly interacts with poly(A) polymerase. The protein is Pre-mRNA polyadenylation factor fip1 of Schizosaccharomyces pombe (strain 972 / ATCC 24843) (Fission yeast).